The chain runs to 440 residues: Adenosylhomocysteinase (440 aa).

Residues T64, D139, and E164 each contribute to the substrate site. Residue 165 to 167 (TTT) coordinates NAD(+). Residues K194 and D198 each contribute to the substrate site. Residues N199, 228 to 233 (GFGDVG), E251, N286, 307 to 309 (IGH), and N352 each bind NAD(+).

This sequence belongs to the adenosylhomocysteinase family. It depends on NAD(+) as a cofactor.

The protein resides in the cytoplasm. The catalysed reaction is S-adenosyl-L-homocysteine + H2O = L-homocysteine + adenosine. It functions in the pathway amino-acid biosynthesis; L-homocysteine biosynthesis; L-homocysteine from S-adenosyl-L-homocysteine: step 1/1. Functionally, may play a key role in the regulation of the intracellular concentration of adenosylhomocysteine. This Granulibacter bethesdensis (strain ATCC BAA-1260 / CGDNIH1) protein is Adenosylhomocysteinase.